A 296-amino-acid chain; its full sequence is 4-hydroxybenzoate octaprenyltransferase (296 aa).

8 helical membrane-spanning segments follow: residues 29–49, 55–75, 102–122, 146–166, 169–189, 219–239, 241–261, and 275–295; these read IGIY…ADGV, LLIF…INDF, AWIT…LTNA, YYPQ…AFTA, GELP…TVAY, LIIG…GSRF, LGLY…WEAW, and FLHN…DYAL.

Belongs to the UbiA prenyltransferase family. Requires Mg(2+) as cofactor.

Its subcellular location is the cell inner membrane. It catalyses the reaction all-trans-octaprenyl diphosphate + 4-hydroxybenzoate = 4-hydroxy-3-(all-trans-octaprenyl)benzoate + diphosphate. Its pathway is cofactor biosynthesis; ubiquinone biosynthesis. Functionally, catalyzes the prenylation of para-hydroxybenzoate (PHB) with an all-trans polyprenyl group. Mediates the second step in the final reaction sequence of ubiquinone-8 (UQ-8) biosynthesis, which is the condensation of the polyisoprenoid side chain with PHB, generating the first membrane-bound Q intermediate 3-octaprenyl-4-hydroxybenzoate. In Pseudomonas aeruginosa (strain UCBPP-PA14), this protein is 4-hydroxybenzoate octaprenyltransferase.